Consider the following 473-residue polypeptide: G2/mitotic-specific cyclin-1 (473 aa).

The segment covering 1–12 has biased composition (polar residues); that stretch reads MGSRNIVQQQNR. 2 disordered regions span residues 1–23 and 134–155; these read MGSRNIVQQQNRAEAAVPGAMKQ and KEKPIEKEKAAEKSAKKKAPTL. The span at 134-147 shows a compositional bias: basic and acidic residues; sequence KEKPIEKEKAAEKS.

This sequence belongs to the cyclin family. Cyclin AB subfamily. Interacts with the CDC2 and CDK2 protein kinases to form a serine/threonine kinase holoenzyme complex. The cyclin subunit imparts substrate specificity to the complex.

Essential for the control of the cell cycle at the G2/M (mitosis) transition. G2/M cyclins accumulate steadily during G2 and are abruptly destroyed at mitosis. The sequence is that of G2/mitotic-specific cyclin-1 from Antirrhinum majus (Garden snapdragon).